We begin with the raw amino-acid sequence, 236 residues long: Cytochrome b-c1 complex subunit Rieske-4, mitochondrial (236 aa).

A mitochondrion-targeting transit peptide spans Met1–Phe24. The Mitochondrial matrix segment spans residues Ser25–Arg73. The helical transmembrane segment at Ala74–Leu96 threads the bilayer. Residues Lys97–Gly236 are Mitochondrial intermembrane-facing. A Rieske domain is found at Ile146–Leu234. Residues Cys179, His181, Cys198, and His201 each contribute to the [2Fe-2S] cluster site. Cys184 and Cys200 form a disulfide bridge.

This sequence belongs to the Rieske iron-sulfur protein family. In terms of assembly, component of the ubiquinol-cytochrome c oxidoreductase (cytochrome b-c1 complex, complex III, CIII), a multisubunit enzyme composed of 3 respiratory subunits cytochrome b, cytochrome c1 and Rieske protein, 2 core protein subunits, and several low-molecular weight protein subunits. The complex exists as an obligatory dimer and forms supercomplexes (SCs) in the inner mitochondrial membrane with cytochrome c oxidase (complex IV, CIV). [2Fe-2S] cluster is required as a cofactor.

It localises to the mitochondrion inner membrane. It catalyses the reaction a quinol + 2 Fe(III)-[cytochrome c](out) = a quinone + 2 Fe(II)-[cytochrome c](out) + 2 H(+)(out). Its function is as follows. Component of the ubiquinol-cytochrome c oxidoreductase, a multisubunit transmembrane complex that is part of the mitochondrial electron transport chain which drives oxidative phosphorylation. The respiratory chain contains 3 multisubunit complexes succinate dehydrogenase (complex II, CII), ubiquinol-cytochrome c oxidoreductase (cytochrome b-c1 complex, complex III, CIII) and cytochrome c oxidase (complex IV, CIV), that cooperate to transfer electrons derived from NADH and succinate to molecular oxygen, creating an electrochemical gradient over the inner membrane that drives transmembrane transport and the ATP synthase. The cytochrome b-c1 complex catalyzes electron transfer from ubiquinol to cytochrome c, linking this redox reaction to translocation of protons across the mitochondrial inner membrane, with protons being carried across the membrane as hydrogens on the quinol. In the process called Q cycle, 2 protons are consumed from the matrix, 4 protons are released into the intermembrane space and 2 electrons are passed to cytochrome c. The Rieske protein is a catalytic core subunit containing a [2Fe-2S] iron-sulfur cluster. It cycles between 2 conformational states during catalysis to transfer electrons from the quinol bound in the Q(0) site in cytochrome b to cytochrome c1. This is Cytochrome b-c1 complex subunit Rieske-4, mitochondrial from Nicotiana tabacum (Common tobacco).